Here is a 155-residue protein sequence, read N- to C-terminus: Nascent polypeptide-associated complex subunit beta (155 aa).

2 disordered regions span residues 1-39 and 122-155; these read MDQAKLARLQQSVRIGTGKGTPRRKTKKVHKSSGTDDKK and QNMQKKEGEAKKEGEEDDEDIPDLVGETFESKVE. Over residues 21-31 the composition is skewed to basic residues; that stretch reads TPRRKTKKVHK. An NAC-A/B domain is found at 34 to 99; sequence GTDDKKLQTS…GEEKELTELV (66 aa). A compositionally biased stretch (basic and acidic residues) spans 125–135; the sequence is QKKEGEAKKEG.

The protein belongs to the NAC-beta family. Part of the nascent polypeptide-associated complex (NAC), consisting of EGD2 and EGD1. NAC associates with ribosomes via EGD1.

The protein resides in the cytoplasm. The protein localises to the nucleus. Component of the nascent polypeptide-associated complex (NAC), a dynamic component of the ribosomal exit tunnel, protecting the emerging polypeptides from interaction with other cytoplasmic proteins to ensure appropriate nascent protein targeting. The NAC complex also promotes mitochondrial protein import by enhancing productive ribosome interactions with the outer mitochondrial membrane and blocks the inappropriate interaction of ribosomes translating non-secretory nascent polypeptides with translocation sites in the membrane of the endoplasmic reticulum. EGD1 may act as a transcription factor that exert a negative effect on the expression of several genes that are transcribed by RNA polymerase II. In Coccidioides immitis (strain RS) (Valley fever fungus), this protein is Nascent polypeptide-associated complex subunit beta (EGD1).